The primary structure comprises 255 residues: Small ribosomal subunit protein uS2 (255 aa).

The tract at residues 232–255 (ASGRDLGASEEVPVEPALEEASEA) is disordered.

Belongs to the universal ribosomal protein uS2 family.

The sequence is that of Small ribosomal subunit protein uS2 from Rhizobium meliloti (strain 1021) (Ensifer meliloti).